The sequence spans 104 residues: uncharacterized protein (104 aa).

Residues leucine 72 to isoleucine 92 form a helical membrane-spanning segment.

It is found in the membrane. This is an uncharacterized protein from Saccharomyces cerevisiae (strain ATCC 204508 / S288c) (Baker's yeast).